The chain runs to 480 residues: Cysteine--tRNA ligase (480 aa).

Residue Cys27 participates in Zn(2+) binding. Residues 29–39 carry the 'HIGH' region motif; it reads PTVYNYAHIGN. 3 residues coordinate Zn(2+): Cys221, His246, and Glu250. Residues 278-282 carry the 'KMSKS' region motif; it reads KMSKS. ATP is bound at residue Lys281.

The protein belongs to the class-I aminoacyl-tRNA synthetase family. In terms of assembly, monomer. Zn(2+) is required as a cofactor.

It localises to the cytoplasm. It carries out the reaction tRNA(Cys) + L-cysteine + ATP = L-cysteinyl-tRNA(Cys) + AMP + diphosphate. This Borreliella afzelii (strain PKo) (Borrelia afzelii) protein is Cysteine--tRNA ligase.